The chain runs to 606 residues: MSFQSINIDKWLKNAVAAQGFKKMTPVQANAIPLFLKNKDLVVEAVTGSGKTLAYLLPCFDKVTRRDTDETGLGALIVAPTRELATQIFNVTKELLAYQPDSLDGGKKLVADMYIGGKGTLTNDLASFREKNPSVVIGTPGRLNEMLSHISSKHLEILILDEADTLIDMGFQRTLQSIISQLPKQRRTGLFSATMNDTVSSFLKIAGLRNSVRVSVTVTSKKIDTRTPSSLAIQSLVIPPIYKVQCMIHLLCTIEYEKAIVFFSSCASVEYFNSLFLTYKLPFEIVALHGQQVQSNRSRNFEKFKKSNKKTVLFTTDIASRGLDIPNVDFVLQLDPPLDPKSFSHRCGRAGRAGRAGVAIVLLNDGREEEYEELLRVRKVPITRIDTPIEALDLSRLKVLTHELRKIVSKDRDLYDKGLRAFVSHVRAYTKHHASFIFRIKDLDLGQLATAYALLHLPKMPELKDTEISENIFKKFDIDYATIPYRDQVREQARRRRLEVEKTEPKKLARPAKIKNEAWSKQKEVKEKRNTRREKRKSKKEFLKAQKNEASNNLKQEIVSKAGAQETENDDLIDEESDALSELEEDYRQLKKSKKRKNQASFGFSM.

Positions 1-29 (MSFQSINIDKWLKNAVAAQGFKKMTPVQA) match the Q motif motif. Residues 32–213 (IPLFLKNKDL…KIAGLRNSVR (182 aa)) form the Helicase ATP-binding domain. 45 to 52 (AVTGSGKT) is an ATP binding site. The DEAD box motif lies at 161–164 (DEAD). Residues 246–400 (CMIHLLCTIE…ALDLSRLKVL (155 aa)) enclose the Helicase C-terminal domain. Positions 521–574 (KQKEVKEKRNTRREKRKSKKEFLKAQKNEASNNLKQEIVSKAGAQETENDDLID) are disordered. Residues 521-601 (KQKEVKEKRN…KSKKRKNQAS (81 aa)) adopt a coiled-coil conformation. Basic residues predominate over residues 529–539 (RNTRREKRKSK).

This sequence belongs to the DEAD box helicase family. DDX55/SPB4 subfamily. As to quaternary structure, component of pre-60S ribosomal complexes.

The protein resides in the nucleus. Its subcellular location is the nucleolus. The enzyme catalyses ATP + H2O = ADP + phosphate + H(+). Its function is as follows. ATP-binding RNA helicase involved in the biogenesis of 60S ribosomal subunits. Binds 90S pre-ribosomal particles and dissociates from pre-60S ribosomal particles after processing of 27SB pre-rRNA. Required for the normal formation of 18S rRNA through the processing of pre-rRNAs at sites A0, A1 and A2, and the normal formation of 25S and 5.8S rRNAs through the processing of pre-rRNAs at sites C1 and C2. This chain is ATP-dependent rRNA helicase spb4, found in Schizosaccharomyces pombe (strain 972 / ATCC 24843) (Fission yeast).